A 306-amino-acid chain; its full sequence is Voltage-dependent anion channel-forming protein RSc3414 (306 aa).

The next 4 helical transmembrane spans lie at 28–48 (LFLI…WLPI), 50–70 (VNLS…FLGF), 213–233 (YSVM…FGLV), and 239–259 (FTPV…AIAA).

It belongs to the anion channel-forming bestrophin (TC 1.A.46) family.

Its subcellular location is the cell membrane. This Ralstonia nicotianae (strain ATCC BAA-1114 / GMI1000) (Ralstonia solanacearum) protein is Voltage-dependent anion channel-forming protein RSc3414.